Here is a 201-residue protein sequence, read N- to C-terminus: MGDPKYPRRVWRKPKRPLNYELKMEELKTLGTFGLRTKRELWKAHTELSRVRHQARSLLALRQEVRAEKEPILMKSLARIGLVSSDATLDDVLNLTANDLLSRRLQTIVTKKLGFKTPYQARQAVIHGHIMIGERKVDIPSYTVTVEEENSIHFAPESKIPQVLEKTKSEAPAEETVEAPAEETVEAPAEEKKEESPSTES.

The 65-residue stretch at 103–167 (RRLQTIVTKK…SKIPQVLEKT (65 aa)) folds into the S4 RNA-binding domain. The segment at 163-201 (VLEKTKSEAPAEETVEAPAEETVEAPAEEKKEESPSTES) is disordered. Acidic residues predominate over residues 172-185 (PAEETVEAPAEETV). A compositionally biased stretch (basic and acidic residues) spans 189 to 201 (AEEKKEESPSTES).

The protein belongs to the universal ribosomal protein uS4 family. In terms of assembly, part of the 30S ribosomal subunit. Contacts protein S5. The interaction surface between S4 and S5 is involved in control of translational fidelity.

Functionally, one of the primary rRNA binding proteins, it binds directly to 16S rRNA where it nucleates assembly of the body of the 30S subunit. In terms of biological role, with S5 and S12 plays an important role in translational accuracy. In Nitrosopumilus maritimus (strain SCM1), this protein is Small ribosomal subunit protein uS4.